Consider the following 446-residue polypeptide: Neuropeptide Y receptor type 5 (446 aa).

At 1-42 (MGSEIPDYYNKTLASENNTVATRNSGFPVWEDYKGSVDDLQY) the chain is on the extracellular side. 2 N-linked (GlcNAc...) asparagine glycosylation sites follow: Asn10 and Asn17. A helical membrane pass occupies residues 43 to 63 (FLIGLYTFVSLLGFMGNLLIL). Residues 64-77 (MAVMRKRNQKTTVN) are Cytoplasmic-facing. A helical membrane pass occupies residues 78 to 98 (FLIGNLAFSDILVVLFCSPFT). Topologically, residues 99-117 (LTSVLLDQWMFGKVMCHIM) are extracellular. The cysteines at positions 114 and 198 are disulfide-linked. Residues 118–138 (PFLQCVTVLVSTLILISIAIV) form a helical membrane-spanning segment. Residues 139–156 (RYHMIKHPVSNNLTANHG) lie on the Cytoplasmic side of the membrane. Residues 157–177 (YFLIATVWTLGLAICSPLPVF) traverse the membrane as a helical segment. At 178-208 (HSLVELQESFGSAWLSSRYLCVESWPSDSYR) the chain is on the extracellular side. Residues 209-229 (IAFTISLLLVQYILPLVCLTV) form a helical membrane-spanning segment. The Cytoplasmic segment spans residues 230-369 (SHTSVCRTIS…RKRSRSVFYR (140 aa)). The segment at 297 to 325 (RPAPAGPALESREGRPPGKVGSMQSQPPP) is disordered. The chain crosses the membrane as a helical span at residues 370-390 (LTVLILVFAVSWMPLHLFHVV). The Extracellular portion of the chain corresponds to 391–407 (TDFNDNLISNRHFKLVY). Residues 408–428 (CICHLLGMMSCCLNPILYGFL) form a helical membrane-spanning segment. Residues 429 to 446 (NNGIKADLMSLIHCLHVS) are Cytoplasmic-facing. The S-palmitoyl cysteine moiety is linked to residue Cys442.

This sequence belongs to the G-protein coupled receptor 1 family.

It localises to the cell membrane. Functionally, receptor for neuropeptide Y and peptide YY. The activity of this receptor is mediated by G proteins that inhibit adenylate cyclase activity. Seems to be associated with food intake. Could be involved in feeding disorders. The sequence is that of Neuropeptide Y receptor type 5 (NPY5R) from Sus scrofa (Pig).